We begin with the raw amino-acid sequence, 53 residues long: Bowman-Birk type proteinase inhibitor II-4 (53 aa).

Disulfide bonds link Cys8–Cys23, Cys13–Cys21, Cys30–Cys37, and Cys34–Cys49.

The protein belongs to the Bowman-Birk serine protease inhibitor family.

This chain is Bowman-Birk type proteinase inhibitor II-4, found in Triticum aestivum (Wheat).